The chain runs to 409 residues: Single Ig IL-1-related receptor (409 aa).

Residues 1–117 (MAGVCDMAPN…TLWRAGPAGH (117 aa)) lie on the Extracellular side of the membrane. The region spanning 9–108 (PNFLSPSEDQ…VWNVSSHSFT (100 aa)) is the Ig-like C2-type domain. Residues N31, N58, N73, N85, and N101 are each glycosylated (N-linked (GlcNAc...) asparagine). C32 and C97 are joined by a disulfide. The chain crosses the membrane as a helical; Signal-anchor for type III membrane protein span at residues 118–138 (VAAVLASLLVLVVLLLVALLY). Residues 139 to 409 (VKCRLNMLLW…FYCLVSEDDV (271 aa)) are Cytoplasmic-facing. Residues 162–306 (KLYDAYVSYS…DFWKELQLAL (145 aa)) form the TIR domain. S382 carries the phosphoserine modification.

This sequence belongs to the interleukin-1 receptor family. In terms of assembly, interacts with IL1R1, IRAK1, TLR4, TLR5, TLR9 and TRAF6. Upon IL-1 stimulation found in a complex at least composed of IL1R1, SIGIRR, MYD88, IRAK1 and TRAF6. Upon stimulation with LPC found in a complex at least composed of TLR4, SIG1IR, MYD88, IRAK1 and TRAF6. Interacts with PALM3. Expressed at high levels in kidney, and at moderate levels in colon, small intestine, lung, spleen and liver. Not expressed in brain and muscle. Expressed at high levels in epithelial cells, at moderate levels in splenocytes, and at low or undetectable levels in fibroblasts or endothelial cells. Expressed in mucosal and dendritic cells.

It is found in the membrane. Functionally, acts as a negative regulator of the Toll-like and IL-1R receptor signaling pathways. Attenuates the recruitment of receptor-proximal signaling components to the TLR4 receptor, probably through an TIR-TIR domain interaction with TLR4. Through its extracellular domain interferes with the heterodimerization of Il1R1 and IL1RAP. This Mus musculus (Mouse) protein is Single Ig IL-1-related receptor (Sigirr).